A 132-amino-acid polypeptide reads, in one-letter code: Bleomycin resistance protein (132 aa).

The VOC domain occupies 1 to 129; the sequence is MLQSIPALPV…DNNLISFFQQ (129 aa).

It belongs to the bleomycin resistance protein family.

Binding protein with a strong affinity to the bleomycin family of antibiotics. The sequence is that of Bleomycin resistance protein (bleO) from Geobacillus stearothermophilus (Bacillus stearothermophilus).